The following is a 77-amino-acid chain: UPF0346 protein LMOf2365_1885 (77 aa).

Belongs to the UPF0346 family.

This is UPF0346 protein LMOf2365_1885 from Listeria monocytogenes serotype 4b (strain F2365).